Reading from the N-terminus, the 125-residue chain is Fluoride-specific ion channel FluC (125 aa).

3 helical membrane-spanning segments follow: residues 36–56, 65–85, and 99–119; these read GTIFVNVVGSFLLSFLMFLSI, FILFFGTGFLGAFTTFSTFAY, and IIYFIANIFLGFFAAILGMFL. Na(+) contacts are provided by G75 and T78.

This sequence belongs to the fluoride channel Fluc/FEX (TC 1.A.43) family.

Its subcellular location is the cell inner membrane. The catalysed reaction is fluoride(in) = fluoride(out). With respect to regulation, na(+) is not transported, but it plays an essential structural role and its presence is essential for fluoride channel function. Fluoride-specific ion channel. Important for reducing fluoride concentration in the cell, thus reducing its toxicity. This Thermosipho africanus (strain TCF52B) protein is Fluoride-specific ion channel FluC.